The chain runs to 118 residues: UPF0295 protein BcerKBAB4_0454 (118 aa).

Helical transmembrane passes span 12-32 and 43-63; these read IRTF…LGVF and FMMV…WIGM.

This sequence belongs to the UPF0295 family.

It localises to the cell membrane. The polypeptide is UPF0295 protein BcerKBAB4_0454 (Bacillus mycoides (strain KBAB4) (Bacillus weihenstephanensis)).